A 121-amino-acid chain; its full sequence is Small ribosomal subunit protein uS12c (121 aa).

This sequence belongs to the universal ribosomal protein uS12 family. As to quaternary structure, part of the 30S ribosomal subunit.

The protein localises to the plastid. Its subcellular location is the apicoplast. With S4 and S5 plays an important role in translational accuracy. Located at the interface of the 30S and 50S subunits. This is Small ribosomal subunit protein uS12c (rps12) from Toxoplasma gondii.